We begin with the raw amino-acid sequence, 1294 residues long: ATPase PglY (1294 aa).

A disordered region spans residues 1205–1263; it reads TQAAATPPPAPAASQPTAGDLSLDTPTSDPRIPYTSQETPTSSGGAGTARTSGGRRTTA. A compositionally biased stretch (polar residues) spans 1228 to 1244; that stretch reads DTPTSDPRIPYTSQETP. A compositionally biased stretch (low complexity) spans 1252 to 1263; that stretch reads TARTSGGRRTTA.

Functionally, BREX systems (bacteriophage exclusion) provide immunity against bacteriophage. Part of a type 2 BREX system. Previously called the phage growth limitation (Pgl) system, it confers protection against bacteriophage phiC31. The bacteria allows one cycle of phage infection, but subsequent cycles are impaired, protecting the original bacterial colony. The system undergoes high rates (10(-3) to 10(-4)) of phase reversion, i.e. loss and regain of phiC31 resistance. When the pglW-pglX-pglY-pglZ genes are transformed into a susceptible S.lividans (strain 1326) they confer resistance to infection by phage phiC31 and phiBT1; all 4 genes are necessary. In terms of biological role, hydrolyzes ATP but not AMP, ADP, GMP, GDP or GTP; activity is inhibited by the non-hydrolyzable ATP analog 5-adenylyl beta,gamma-imidodiphosphate. The sequence is that of ATPase PglY from Streptomyces coelicolor (strain ATCC BAA-471 / A3(2) / M145).